A 72-amino-acid polypeptide reads, in one-letter code: Translation initiation factor IF-1 (72 aa).

Positions 1–72 (MIKEDNIEMH…SKGRIIFRSR (72 aa)) constitute an S1-like domain.

The protein belongs to the IF-1 family. Component of the 30S ribosomal translation pre-initiation complex which assembles on the 30S ribosome in the order IF-2 and IF-3, IF-1 and N-formylmethionyl-tRNA(fMet); mRNA recruitment can occur at any time during PIC assembly.

It is found in the cytoplasm. One of the essential components for the initiation of protein synthesis. Stabilizes the binding of IF-2 and IF-3 on the 30S subunit to which N-formylmethionyl-tRNA(fMet) subsequently binds. Helps modulate mRNA selection, yielding the 30S pre-initiation complex (PIC). Upon addition of the 50S ribosomal subunit IF-1, IF-2 and IF-3 are released leaving the mature 70S translation initiation complex. The polypeptide is Translation initiation factor IF-1 (Blochmanniella floridana).